We begin with the raw amino-acid sequence, 397 residues long: Phosphoglycerate kinase (397 aa).

Substrate is bound by residues 21–23 (DFN), Arg-37, 60–63 (HLGR), Arg-119, and Arg-152. ATP-binding positions include Lys-203, Gly-294, Glu-325, and 354–357 (GGDS).

This sequence belongs to the phosphoglycerate kinase family. As to quaternary structure, monomer.

The protein resides in the cytoplasm. The catalysed reaction is (2R)-3-phosphoglycerate + ATP = (2R)-3-phospho-glyceroyl phosphate + ADP. The protein operates within carbohydrate degradation; glycolysis; pyruvate from D-glyceraldehyde 3-phosphate: step 2/5. The protein is Phosphoglycerate kinase of Chlorobaculum tepidum (strain ATCC 49652 / DSM 12025 / NBRC 103806 / TLS) (Chlorobium tepidum).